We begin with the raw amino-acid sequence, 211 residues long: Pyridoxine/pyridoxamine 5'-phosphate oxidase (211 aa).

Residues 7–10 (RREY) and lysine 65 each bind substrate. FMN contacts are provided by residues 60-65 (RIVLLK), 75-76 (YT), arginine 81, lysine 82, and glutamine 104. 3 residues coordinate substrate: tyrosine 122, arginine 126, and serine 130. FMN-binding positions include 139–140 (QS) and tryptophan 184. 190 to 192 (RLH) provides a ligand contact to substrate. Arginine 194 contacts FMN.

This sequence belongs to the pyridoxamine 5'-phosphate oxidase family. In terms of assembly, homodimer. Requires FMN as cofactor.

The enzyme catalyses pyridoxamine 5'-phosphate + O2 + H2O = pyridoxal 5'-phosphate + H2O2 + NH4(+). It catalyses the reaction pyridoxine 5'-phosphate + O2 = pyridoxal 5'-phosphate + H2O2. It functions in the pathway cofactor metabolism; pyridoxal 5'-phosphate salvage; pyridoxal 5'-phosphate from pyridoxamine 5'-phosphate: step 1/1. Its pathway is cofactor metabolism; pyridoxal 5'-phosphate salvage; pyridoxal 5'-phosphate from pyridoxine 5'-phosphate: step 1/1. Its function is as follows. Catalyzes the oxidation of either pyridoxine 5'-phosphate (PNP) or pyridoxamine 5'-phosphate (PMP) into pyridoxal 5'-phosphate (PLP). This Vibrio campbellii (strain ATCC BAA-1116) protein is Pyridoxine/pyridoxamine 5'-phosphate oxidase.